The primary structure comprises 145 residues: Large ribosomal subunit protein bL9 (145 aa).

The protein belongs to the bacterial ribosomal protein bL9 family.

Binds to the 23S rRNA. The sequence is that of Large ribosomal subunit protein bL9 from Ureaplasma parvum serovar 3 (strain ATCC 700970).